We begin with the raw amino-acid sequence, 97 residues long: MNIRPLHDRVIVKRKEVESKSAGGIVLTGSAAGKSTRGEVLAVGHGRILENGEVKPLDVKVGDIVIFNDGYGVKAEKIDNEEVLIMSESDILAIVEA.

Belongs to the GroES chaperonin family. Heptamer of 7 subunits arranged in a ring. Interacts with the chaperonin GroEL.

It localises to the cytoplasm. Functionally, together with the chaperonin GroEL, plays an essential role in assisting protein folding. The GroEL-GroES system forms a nano-cage that allows encapsulation of the non-native substrate proteins and provides a physical environment optimized to promote and accelerate protein folding. GroES binds to the apical surface of the GroEL ring, thereby capping the opening of the GroEL channel. This is Co-chaperonin GroES from Pectobacterium carotovorum subsp. carotovorum (strain PC1).